We begin with the raw amino-acid sequence, 288 residues long: Bifunctional protein FolD 2 (288 aa).

NADP(+) is bound by residues 166-168 and S191; that span reads GRS.

It belongs to the tetrahydrofolate dehydrogenase/cyclohydrolase family. Homodimer.

It carries out the reaction (6R)-5,10-methylene-5,6,7,8-tetrahydrofolate + NADP(+) = (6R)-5,10-methenyltetrahydrofolate + NADPH. The enzyme catalyses (6R)-5,10-methenyltetrahydrofolate + H2O = (6R)-10-formyltetrahydrofolate + H(+). It functions in the pathway one-carbon metabolism; tetrahydrofolate interconversion. Catalyzes the oxidation of 5,10-methylenetetrahydrofolate to 5,10-methenyltetrahydrofolate and then the hydrolysis of 5,10-methenyltetrahydrofolate to 10-formyltetrahydrofolate. The sequence is that of Bifunctional protein FolD 2 from Myxococcus xanthus (strain DK1622).